Consider the following 457-residue polypeptide: Argininosuccinate lyase (457 aa).

Belongs to the lyase 1 family. Argininosuccinate lyase subfamily.

It localises to the cytoplasm. It catalyses the reaction 2-(N(omega)-L-arginino)succinate = fumarate + L-arginine. It participates in amino-acid biosynthesis; L-arginine biosynthesis; L-arginine from L-ornithine and carbamoyl phosphate: step 3/3. The polypeptide is Argininosuccinate lyase (Shigella flexneri serotype 5b (strain 8401)).